We begin with the raw amino-acid sequence, 229 residues long: Protein TraJ (229 aa).

Its subcellular location is the cytoplasm. Functionally, this protein is essential for positively regulating the expression of transfer genes that are involved in the conjugal transfer of DNA between bacterial cells. The sequence is that of Protein TraJ (traJ) from Escherichia coli (strain K12).